Reading from the N-terminus, the 211-residue chain is GATA transcription factor 19 (211 aa).

The GATA-type zinc finger occupies 77–102 (CANCDTTSTPLWRNGPRGPKSLCNAC). The segment at 111 to 131 (RRASTARNSTSGGGSTAAGVP) is disordered.

The protein belongs to the type IV zinc-finger family. Class B subfamily. In terms of assembly, forms heterodimers with GATA18.

Its subcellular location is the nucleus. In terms of biological role, transcriptional regulator that specifically binds 5'-GATA-3' or 5'-GAT-3' motifs within gene promoters. Regulates both flower and shoot apical meristem (SAM) development, especially for establishing organ boundaries in shoots and flowers, probably by controlling the number and position of WUS-expressing cells. This chain is GATA transcription factor 19, found in Arabidopsis thaliana (Mouse-ear cress).